Here is a 442-residue protein sequence, read N- to C-terminus: MSDSPSRQQQLLRAQSNDPSFDNVWDELIWRGLVYVSTDEAALKQLLAGEPIAYYCGFDPTAPSLHLGNLVQLLTMRRLQLAGHRPFGLVGGSTGLIGDPKPSAERTLNAKETVAEWVGSLREQVTRFLSAEGDNAVRLVNNLDWTAPLSAIDFLREIGKHFRVGAMLKKDAVAARLNSDEGISYTEFSYQILQGLDYLELYRQHGCVLQTGGSDQWGNLTSGTELIRRVEGGHAHAVGTPLITNSDGTKFGKSEGNAVWLDPALTSPYAMYQFWLNTDDADVIARLKVFTFLHRDEIERLERAVAEEPFRREAQRRLALDVTSLVHGAAAAEAVIAASEALFGRGGDLAQQDTDTLASALRELPHTVSAPGVAIAQALVDTGLTKSLSEARRAVAQGGVSANNATVQDADAPVGDALLPGGMLVLRRGKKTLAGVFVEEGV.

L-tyrosine is bound at residue Y55. Positions 60 to 69 (PTAPSLHLGN) match the 'HIGH' region motif. L-tyrosine contacts are provided by Y190 and Q194. The 'KMSKS' region motif lies at 250–254 (KFGKS). K253 serves as a coordination point for ATP. In terms of domain architecture, S4 RNA-binding spans 373-438 (VAIAQALVDT…GKKTLAGVFV (66 aa)).

The protein belongs to the class-I aminoacyl-tRNA synthetase family. TyrS type 1 subfamily. As to quaternary structure, homodimer.

The protein localises to the cytoplasm. The enzyme catalyses tRNA(Tyr) + L-tyrosine + ATP = L-tyrosyl-tRNA(Tyr) + AMP + diphosphate + H(+). In terms of biological role, catalyzes the attachment of tyrosine to tRNA(Tyr) in a two-step reaction: tyrosine is first activated by ATP to form Tyr-AMP and then transferred to the acceptor end of tRNA(Tyr). This chain is Tyrosine--tRNA ligase, found in Leifsonia xyli subsp. xyli (strain CTCB07).